Reading from the N-terminus, the 365-residue chain is Caffeic acid 3-O-methyltransferase (365 aa).

A substrate-binding site is contributed by 130–136 (MNQDKVL). The tract at residues 162-180 (AFDYHGTDPRFNKVFNKGM) is substrate binding. S-adenosyl-L-methionine is bound by residues G208, D231, D251, M252, and K265. The Proton acceptor role is filled by H269.

It belongs to the class I-like SAM-binding methyltransferase superfamily. Cation-independent O-methyltransferase family. COMT subfamily. As to quaternary structure, homodimer.

It carries out the reaction (E)-caffeate + S-adenosyl-L-methionine = (E)-ferulate + S-adenosyl-L-homocysteine + H(+). The protein operates within aromatic compound metabolism; phenylpropanoid biosynthesis. Catalyzes the conversion of caffeic acid to ferulic acid and of 5-hydroxyferulic acid to sinapic acid. The resulting products may subsequently be converted to the corresponding alcohols that are incorporated into lignins. The chain is Caffeic acid 3-O-methyltransferase (COMT1) from Rosa chinensis (China rose).